Reading from the N-terminus, the 405-residue chain is BRCA1-A complex subunit Abraxas 1 (405 aa).

One can recognise an MPN domain in the interval 7–153 (SALLSGFVFG…CSTYRLEHAL (147 aa)). A coiled-coil region spans residues 208 to 262 (SLQEVHKINEMYATLQEELKKMCSDVEVSERSVEKLLTEVSQLKEEINRKKQHKI). Positions 365–405 (LHQDEEDCNQETKLALSSAETDEEALENPKDTNEYSYSPTF) are disordered. Ser-402 carries the post-translational modification Phosphoserine. The pSXXF motif motif lies at 402–405 (SPTF).

Belongs to the FAM175 family. Abraxas subfamily. Component of the BRCA1-A complex. Component of the BRISC complex. Homodimer. Interacts directly (when phosphorylated at Ser-402) with BRCA1. The phosphorylated homodimer can interact directly with two BRCA1 chains, giving rise to a heterotetramer. Post-translationally, phosphorylation of Ser-402 of the pSXXF motif by ATM or ATR constitutes a specific recognition motif for the BRCT domain of BRCA1.

It localises to the nucleus. Functionally, involved in DNA damage response and double-strand break (DSB) repair. Component of the BRCA1-A complex, acting as a central scaffold protein that assembles the various components of the complex and mediates the recruitment of BRCA1. The BRCA1-A complex specifically recognizes 'Lys-63'-linked ubiquitinated histones H2A and H2AX at DNA lesion sites, leading to target the BRCA1-BARD1 heterodimer to sites of DNA damage at DSBs. This complex also possesses deubiquitinase activity that specifically removes 'Lys-63'-linked ubiquitin on histones H2A and H2AX. The protein is BRCA1-A complex subunit Abraxas 1 of Gallus gallus (Chicken).